Here is a 131-residue protein sequence, read N- to C-terminus: Holo-[acyl-carrier-protein] synthase (131 aa).

Residues aspartate 8 and glutamate 63 each contribute to the Mg(2+) site.

It belongs to the P-Pant transferase superfamily. AcpS family. Requires Mg(2+) as cofactor.

Its subcellular location is the cytoplasm. The catalysed reaction is apo-[ACP] + CoA = holo-[ACP] + adenosine 3',5'-bisphosphate + H(+). In terms of biological role, transfers the 4'-phosphopantetheine moiety from coenzyme A to a Ser of acyl-carrier-protein. This is Holo-[acyl-carrier-protein] synthase from Shewanella pealeana (strain ATCC 700345 / ANG-SQ1).